The primary structure comprises 488 residues: Catalase (488 aa).

Residues Met1–Arg26 are disordered. Polar residues predominate over residues Leu7–Thr23. Residues His55 and Asn128 contribute to the active site. Position 338 (Tyr338) interacts with heme.

The protein belongs to the catalase family. The cofactor is heme.

It is found in the cytoplasm. The catalysed reaction is 2 H2O2 = O2 + 2 H2O. Decomposes hydrogen peroxide into water and oxygen; serves to protect cells from the toxic effects of hydrogen peroxide. The protein is Catalase (kat) of Listeria monocytogenes serovar 1/2a (strain ATCC BAA-679 / EGD-e).